The chain runs to 1290 residues: Sorbin and SH3 domain-containing protein 1 (1290 aa).

Disordered stretches follow at residues 1–211 (MSSE…LSDV), 238–271 (HKLN…SKSE), and 286–313 (TLPL…KKVD). The span at 45-61 (SSSYRGTPSSSPVSPQE) shows a compositional bias: low complexity. At Thr-51 the chain carries Phosphothreonine. Phosphoserine is present on residues Ser-55, Ser-58, and Ser-62. Residues 62-71 (SPKHESKSGL) are compositionally biased toward basic and acidic residues. Polar residues-rich tracts occupy residues 83-95 (LSSS…NAQP) and 123-153 (EVSS…TIVN). Residues 161–173 (HNRDPASERRAGE) are compositionally biased toward basic and acidic residues. 2 positions are modified to phosphoserine: Asp-164 and Asp-175. A Phosphothreonine modification is found at Thr-179. Ser-185, Ala-194, Ser-204, Ser-209, Ser-254, Ser-261, Ser-270, and Pro-288 each carry phosphoserine. The span at 189-199 (ASERRAKDASR) shows a compositional bias: basic and acidic residues. A SoHo domain is found at 202 to 247 (VRSAQDLSDVSTDEVGIPLRNTERSKDWYKTMFKQIHKLNRDDDSD). Basic and acidic residues predominate over residues 240–260 (LNRDDDSDVHSPRYSFSDDTK). The span at 299 to 313 (SPERNDWEPLDKKVD) shows a compositional bias: basic and acidic residues. Phosphotyrosine; by ABL1 is present on Tyr-325. Residues Ser-345, Pro-346, Tyr-357, Ser-376, and Ser-407 each carry the phosphoserine modification. The interval 389-416 (VETVNKSPSANSPQSSAVSPTPDITSEP) is disordered. Over residues 392-412 (VNKSPSANSPQSSAVSPTPDI) the composition is skewed to polar residues. Phosphotyrosine; by ABL1 is present on Tyr-421. Ser-432 and Ser-470 each carry phosphoserine. 6 disordered regions span residues 463–482 (LSGL…RKGG), 588–607 (YDSK…SSRR), 697–739 (SLDF…EMDG), 783–803 (VSND…PKHR), 822–841 (RKHE…SRGD), and 862–972 (PLQQ…SPRH). Thr-475 carries the phosphothreonine modification. Polar residues-rich tracts occupy residues 595-606 (TMSLQEYGTSSR) and 704-722 (LSKS…SARS). Phosphoserine is present on Ser-969. 2 SH3 domains span residues 1049 to 1108 (LEMR…LLPP) and 1123 to 1184 (LEYG…VLKR). Thr-1189 bears the Phosphothreonine mark. Phosphotyrosine is present on residues Tyr-1193 and Tyr-1198. The span at 1198–1210 (YSSSPSRSATVSP) shows a compositional bias: low complexity. The segment at 1198–1227 (YSSSPSRSATVSPQQPQAQQRRVTPDRSQP) is disordered. A phosphoserine mark is found at Ser-1201 and Ser-1209. The span at 1211–1227 (QQPQAQQRRVTPDRSQP) shows a compositional bias: polar residues. The SH3 3 domain maps to 1229–1290 (LDLCSYQALY…PGNYVKPLYL (62 aa)). The residue at position 1238 (Tyr-1238) is a Phosphotyrosine; by ABL1.

Interacts (via SH3 domain 2) with PXN. Interacts with the long isoform of AFDN and with VCL. AFDN and VCL bind to SORBS1 in a competitive manner and do not form a ternary complex. Interacts with ABL1, CBL, CBLB and INPPL1/SHIP2 through the third SH3 domain. Interaction with ABL1 occurs only after insulin stimulation while this has no effect on the interaction with INPPL1. Interacts with the insulin receptor but dissociates from it following insulin stimulation. Also interacts with SCA7, PTK2/FAK1 and flotillin. Interacts (via third SH3 domain) with the Ten-1 ICD form of TENM1; the interaction induces the translocation of SORBS1 to the nucleus. Interacts with INSM1. In terms of processing, O-glycosylated. In terms of tissue distribution, expressed in all tissues tested: heart, brain, spleen, lung, liver, muscle, kidney and testis. Expressed in 3T3-L1 adipocytes but not in 3T3-L1 fibroblasts.

It localises to the cell junction. Its subcellular location is the adherens junction. It is found in the cell membrane. The protein localises to the cytoplasm. The protein resides in the cytoskeleton. It localises to the focal adhesion. Its subcellular location is the nucleus. It is found in the nucleus matrix. Plays a role in tyrosine phosphorylation of CBL by linking CBL to the insulin receptor. Required for insulin-stimulated glucose transport. Involved in formation of actin stress fibers and focal adhesions. This is Sorbin and SH3 domain-containing protein 1 from Mus musculus (Mouse).